Consider the following 350-residue polypeptide: Holliday junction branch migration complex subunit RuvB (350 aa).

The segment at 4–184 is large ATPase domain (RuvB-L); the sequence is TDRLIAAQPQ…FGIVQRLEFY (181 aa). ATP-binding positions include Ile-23, Arg-24, Gly-65, Lys-68, Thr-69, Thr-70, 131–133, Arg-174, Tyr-184, and Arg-221; that span reads EDY. Thr-69 provides a ligand contact to Mg(2+). Positions 185–255 are small ATPAse domain (RuvB-S); sequence AVEELTEIVV…IADQALNMLH (71 aa). Residues 258 to 350 are head domain (RuvB-H); that stretch reads RHGLDHMDRR…PLTPPGESDA (93 aa). Positions 294, 313, and 318 each coordinate DNA.

Belongs to the RuvB family. As to quaternary structure, homohexamer. Forms an RuvA(8)-RuvB(12)-Holliday junction (HJ) complex. HJ DNA is sandwiched between 2 RuvA tetramers; dsDNA enters through RuvA and exits via RuvB. An RuvB hexamer assembles on each DNA strand where it exits the tetramer. Each RuvB hexamer is contacted by two RuvA subunits (via domain III) on 2 adjacent RuvB subunits; this complex drives branch migration. In the full resolvosome a probable DNA-RuvA(4)-RuvB(12)-RuvC(2) complex forms which resolves the HJ.

The protein localises to the cytoplasm. The catalysed reaction is ATP + H2O = ADP + phosphate + H(+). The RuvA-RuvB-RuvC complex processes Holliday junction (HJ) DNA during genetic recombination and DNA repair, while the RuvA-RuvB complex plays an important role in the rescue of blocked DNA replication forks via replication fork reversal (RFR). RuvA specifically binds to HJ cruciform DNA, conferring on it an open structure. The RuvB hexamer acts as an ATP-dependent pump, pulling dsDNA into and through the RuvAB complex. RuvB forms 2 homohexamers on either side of HJ DNA bound by 1 or 2 RuvA tetramers; 4 subunits per hexamer contact DNA at a time. Coordinated motions by a converter formed by DNA-disengaged RuvB subunits stimulates ATP hydrolysis and nucleotide exchange. Immobilization of the converter enables RuvB to convert the ATP-contained energy into a lever motion, pulling 2 nucleotides of DNA out of the RuvA tetramer per ATP hydrolyzed, thus driving DNA branch migration. The RuvB motors rotate together with the DNA substrate, which together with the progressing nucleotide cycle form the mechanistic basis for DNA recombination by continuous HJ branch migration. Branch migration allows RuvC to scan DNA until it finds its consensus sequence, where it cleaves and resolves cruciform DNA. This chain is Holliday junction branch migration complex subunit RuvB, found in Chromohalobacter salexigens (strain ATCC BAA-138 / DSM 3043 / CIP 106854 / NCIMB 13768 / 1H11).